The chain runs to 303 residues: Sushi domain-containing protein 6 (303 aa).

Residues 1 to 39 (MCHGRIAPKSTSVFAVASVGHGVFLPLVILCTLLGDGLA) form the signal peptide. One can recognise a Sushi domain in the interval 40–104 (SVCPLPPEPE…KPAMEISCRL (65 aa)). Residues 40 to 120 (SVCPLPPEPE…HTSLGVPTLS (81 aa)) are Extracellular-facing. Disulfide bonds link C42-C89 and C74-C102. Residues 121–141 (IVASTASSVALILLLVVLFVL) form a helical membrane-spanning segment. Topologically, residues 142–303 (LQPKLKSFHH…TDDIPLLKEA (162 aa)) are cytoplasmic. Disordered stretches follow at residues 199–237 (VLSEGSGPSGRSVPREQQLPDQGACSSAGGEDEAPGQSG) and 263–282 (GSGNRQLAHKETADSENSDI).

The protein resides in the membrane. May play a role in growth-suppressive activity and cell death. May be involved in the production of chemokine molecules in umbilical vein endothelial cells (HUVECs) cultured in THP1 monocyte LPS-induced medium. Plays a role in preventing tumor onset. In Homo sapiens (Human), this protein is Sushi domain-containing protein 6.